The chain runs to 72 residues: MLQPMEPKTVKLAVTGKRTRALMIVYPETLSYRVVDCSRRLFCRIHVSKNCPPYCPIVVAAKDFVSGRREPK.

This is an uncharacterized protein from Archaeoglobus fulgidus (strain ATCC 49558 / DSM 4304 / JCM 9628 / NBRC 100126 / VC-16).